Here is a 412-residue protein sequence, read N- to C-terminus: Putative competence-damage inducible protein (412 aa).

It belongs to the CinA family.

This Bacillus cereus (strain ATCC 14579 / DSM 31 / CCUG 7414 / JCM 2152 / NBRC 15305 / NCIMB 9373 / NCTC 2599 / NRRL B-3711) protein is Putative competence-damage inducible protein.